The chain runs to 398 residues: MNIHEYQAKAVLREFGVPVSHGYPIFKASEAEAAATKLGGPVWVVKSQIHAGGRGKGKFKEASAGDKGGVRLAKSVDEVKTYAEQMLHATLVTVQTGPAGKQVNRLYIEEGSEIDKEFYLSLLVDRATSRISFVVSTEGGMSIEDVAHDTPEKIVSFTVDPATGIMSHHGRAVANALGLKGDQAKQAESLVTKLYTAFLAKDMEMLEINPLVLTKQGDLKCLDAKMSFDGNSLYRHADIQGLRDESEEDAKEIEASKYDLNYVTLDGTIGCMVNGAGLAMATMDIIKLYGMTPANFLDVGGGASKEKVTAAFKIITADPNVKGILINIFGGIMKCDIIAEGVVAAVKEVGLDVPLVVRLEGTNVEAGKKIIKHSGLNVLPADNLDDAAQKIVNAVKGA.

The ATP-grasp domain occupies 9–254 (KAVLREFGVP…ESEEDAKEIE (246 aa)). ATP-binding positions include lysine 46, 53 to 55 (GRG), glutamate 109, serine 112, and glutamate 117. Mg(2+) contacts are provided by asparagine 209 and aspartate 223. Substrate-binding positions include asparagine 274 and 331–333 (GIM).

It belongs to the succinate/malate CoA ligase beta subunit family. Heterotetramer of two alpha and two beta subunits. Requires Mg(2+) as cofactor.

The catalysed reaction is succinate + ATP + CoA = succinyl-CoA + ADP + phosphate. The enzyme catalyses GTP + succinate + CoA = succinyl-CoA + GDP + phosphate. It participates in carbohydrate metabolism; tricarboxylic acid cycle; succinate from succinyl-CoA (ligase route): step 1/1. Succinyl-CoA synthetase functions in the citric acid cycle (TCA), coupling the hydrolysis of succinyl-CoA to the synthesis of either ATP or GTP and thus represents the only step of substrate-level phosphorylation in the TCA. The beta subunit provides nucleotide specificity of the enzyme and binds the substrate succinate, while the binding sites for coenzyme A and phosphate are found in the alpha subunit. This is Succinate--CoA ligase [ADP-forming] subunit beta from Rhodopseudomonas palustris (strain HaA2).